A 395-amino-acid chain; its full sequence is Nucleoside diphosphate kinase homolog 7 (395 aa).

Positions 22-110 constitute a DM10 domain; that stretch reads QSERFAFIAE…YTARQLGSRK (89 aa).

This sequence belongs to the NDK family. Component of sperm flagellar doublet microtubules. Component of the gamma-tubulin ring complex. Widely expressed. Expressed in the flagellum of epididymal sperm but not in testicular sperm (at protein level).

The protein localises to the cytoplasm. It localises to the cytoskeleton. The protein resides in the microtubule organizing center. It is found in the centrosome. Its subcellular location is the nucleus. The protein localises to the spindle. It localises to the cilium axoneme. The protein resides in the flagellum axoneme. It is found in the cell projection. Its subcellular location is the cilium. In terms of biological role, possesses an intrinsic kinase activity. Displays 3'-5' exonuclease activity with a preference for single-stranded DNA. Does not seem to have nucleoside diphosphate kinase activity. Functional component of the gamma-tubulin ring complex, implicated in the regulation of the microtubule-nucleating activity of the gamma-tubulin ring complex in centrosomes, in a kinase activity-dependent manner. Part of the dynein-decorated doublet microtubules (DMTs) in cilia axoneme, which is required for motile cilia beating. In Rattus norvegicus (Rat), this protein is Nucleoside diphosphate kinase homolog 7 (Nme7).